Consider the following 180-residue polypeptide: NADH-quinone oxidoreductase subunit I (180 aa).

2 consecutive 4Fe-4S ferredoxin-type domains span residues 48–80 (IVLT…LQKA) and 90–119 (EFFR…LTPD). [4Fe-4S] cluster contacts are provided by cysteine 60, cysteine 63, cysteine 66, cysteine 70, cysteine 99, cysteine 102, cysteine 105, and cysteine 109.

This sequence belongs to the complex I 23 kDa subunit family. In terms of assembly, NDH-1 is composed of 13 different subunits. Subunits NuoA, H, J, K, L, M, N constitute the membrane sector of the complex. [4Fe-4S] cluster serves as cofactor.

The protein resides in the cell inner membrane. It carries out the reaction a quinone + NADH + 5 H(+)(in) = a quinol + NAD(+) + 4 H(+)(out). Functionally, NDH-1 shuttles electrons from NADH, via FMN and iron-sulfur (Fe-S) centers, to quinones in the respiratory chain. The immediate electron acceptor for the enzyme in this species is believed to be ubiquinone. Couples the redox reaction to proton translocation (for every two electrons transferred, four hydrogen ions are translocated across the cytoplasmic membrane), and thus conserves the redox energy in a proton gradient. The protein is NADH-quinone oxidoreductase subunit I of Sodalis glossinidius (strain morsitans).